An 83-amino-acid polypeptide reads, in one-letter code: uncharacterized protein (83 aa).

This is an uncharacterized protein from Bacillus anthracis.